A 305-amino-acid polypeptide reads, in one-letter code: Oxygen-dependent coproporphyrinogen-III oxidase (305 aa).

Ser-92 serves as a coordination point for substrate. A divalent metal cation is bound by residues His-96 and His-106. Residue His-106 is the Proton donor of the active site. 108-110 (NVR) contacts substrate. Positions 145 and 175 each coordinate a divalent metal cation. The important for dimerization stretch occupies residues 239-274 (YVEFNLLFDRGTLFGLQSGGRAESILISLPPLVRWE). Position 257 to 259 (257 to 259 (GGR)) interacts with substrate.

Belongs to the aerobic coproporphyrinogen-III oxidase family. As to quaternary structure, homodimer. A divalent metal cation is required as a cofactor.

Its subcellular location is the cytoplasm. The enzyme catalyses coproporphyrinogen III + O2 + 2 H(+) = protoporphyrinogen IX + 2 CO2 + 2 H2O. Its pathway is porphyrin-containing compound metabolism; protoporphyrin-IX biosynthesis; protoporphyrinogen-IX from coproporphyrinogen-III (O2 route): step 1/1. Involved in the heme biosynthesis. Catalyzes the aerobic oxidative decarboxylation of propionate groups of rings A and B of coproporphyrinogen-III to yield the vinyl groups in protoporphyrinogen-IX. This chain is Oxygen-dependent coproporphyrinogen-III oxidase, found in Xylella fastidiosa (strain M12).